Reading from the N-terminus, the 113-residue chain is Hydrogenase maturation factor HypA (113 aa).

Histidine 2 contacts Ni(2+). Zn(2+)-binding residues include cysteine 73, cysteine 76, cysteine 89, and cysteine 92.

The protein belongs to the HypA/HybF family.

Involved in the maturation of [NiFe] hydrogenases. Required for nickel insertion into the metal center of the hydrogenase. The sequence is that of Hydrogenase maturation factor HypA from Legionella pneumophila subsp. pneumophila (strain Philadelphia 1 / ATCC 33152 / DSM 7513).